A 117-amino-acid polypeptide reads, in one-letter code: V-type sodium ATPase subunit F (117 aa).

The disordered stretch occupies residues 1–20; the sequence is MARILTRIKEAEENNQKKEE. A compositionally biased stretch (basic and acidic residues) spans 7 to 20; sequence RIKEAEENNQKKEE.

Belongs to the V-ATPase G subunit family.

Functionally, involved in ATP-driven sodium extrusion. This is V-type sodium ATPase subunit F (ntpF) from Enterococcus hirae (strain ATCC 9790 / DSM 20160 / JCM 8729 / LMG 6399 / NBRC 3181 / NCIMB 6459 / NCDO 1258 / NCTC 12367 / WDCM 00089 / R).